The following is a 291-amino-acid chain: Elongation factor Ts (291 aa).

The tract at residues 81 to 84 is involved in Mg(2+) ion dislocation from EF-Tu; sequence TDFV. Residues 271 to 291 form a disordered region; sequence EGKEKKDESFADEVMAQVRDS.

It belongs to the EF-Ts family.

It is found in the cytoplasm. Functionally, associates with the EF-Tu.GDP complex and induces the exchange of GDP to GTP. It remains bound to the aminoacyl-tRNA.EF-Tu.GTP complex up to the GTP hydrolysis stage on the ribosome. This chain is Elongation factor Ts, found in Halorhodospira halophila (strain DSM 244 / SL1) (Ectothiorhodospira halophila (strain DSM 244 / SL1)).